The following is an 889-amino-acid chain: Translation initiation factor IF-2 (889 aa).

The span at 115-236 (EAEAQAKAEA…EAERYSDHHI (122 aa)) shows a compositional bias: basic and acidic residues. The interval 115–293 (EAEAQAKAEA…RNRSTAPESM (179 aa)) is disordered. Residues 257 to 270 (GRRARNKNTAKTKR) show a composition bias toward basic residues. A compositionally biased stretch (basic and acidic residues) spans 271–280 (GGKDARDGRE). One can recognise a tr-type G domain in the interval 389–558 (PRAPVVTIMG…LLQAEVLELK (170 aa)). The interval 398 to 405 (GHVDHGKT) is G1. Residue 398 to 405 (GHVDHGKT) coordinates GTP. Positions 423 to 427 (GITQH) are G2. The tract at residues 444–447 (DTPG) is G3. GTP contacts are provided by residues 444–448 (DTPGH) and 498–501 (NKMD). Positions 498–501 (NKMD) are G4. The tract at residues 534-536 (SAK) is G5.

The protein belongs to the TRAFAC class translation factor GTPase superfamily. Classic translation factor GTPase family. IF-2 subfamily.

It is found in the cytoplasm. Its function is as follows. One of the essential components for the initiation of protein synthesis. Protects formylmethionyl-tRNA from spontaneous hydrolysis and promotes its binding to the 30S ribosomal subunits. Also involved in the hydrolysis of GTP during the formation of the 70S ribosomal complex. This Shewanella sp. (strain ANA-3) protein is Translation initiation factor IF-2.